A 614-amino-acid polypeptide reads, in one-letter code: Putative ABC transporter ATP-binding protein MA_1747 (614 aa).

2 ABC transporter domains span residues 11–251 and 319–552; these read VRLE…KLGI and VLIE…AGLL. ATP-binding positions include 45 to 52 and 352 to 359; these read GPSGCGKS and GHNGAGKT.

The protein belongs to the ABC transporter superfamily.

The protein localises to the cell membrane. Functionally, probably part of an ABC transporter complex. Responsible for energy coupling to the transport system. The chain is Putative ABC transporter ATP-binding protein MA_1747 from Methanosarcina acetivorans (strain ATCC 35395 / DSM 2834 / JCM 12185 / C2A).